The sequence spans 639 residues: Poly(A)-specific ribonuclease PARN (639 aa).

The a divalent metal cation site is built by D28 and E30. 2 positions are modified to phosphoserine: S163 and S167. In terms of domain architecture, R3H spans 178–245 (KKFIDQVVEK…ERYIVISKVD (68 aa)). K220 bears the N6-acetyllysine mark. Positions 292 and 382 each coordinate a divalent metal cation. N6-acetyllysine is present on K499. Residue S530 is modified to Phosphoserine. Residue S557 is modified to Phosphoserine; by MAPKAPK2. The disordered stretch occupies residues 563–611 (TVGKRNLSPSQEEAGLEDGVSGEISDTELEQTDSCAEPLSEGRKKAKKL). S583, S587, S619, S623, and S628 each carry phosphoserine. The residue at position 631 (T631) is a Phosphothreonine.

Belongs to the CAF1 family. In terms of assembly, homodimer. Found in a mRNA decay complex with RENT1, RENT2 and RENT3B. Interacts with KHSRP. Interacts with CELF1/CUGBP1. Interacts with ZC3HAV1 in an RNA-independent manner. Interacts with DHX36. Requires Mg(2+) as cofactor. In terms of processing, phosphorylation by MAPKAPK2, preventing GADD45A mRNA degradation after genotoxic stress.

It localises to the nucleus. The protein resides in the cytoplasm. The protein localises to the nucleolus. The enzyme catalyses Exonucleolytic cleavage of poly(A) to 5'-AMP.. Functionally, 3'-exoribonuclease that has a preference for poly(A) tails of mRNAs, thereby efficiently degrading poly(A) tails. Exonucleolytic degradation of the poly(A) tail is often the first step in the decay of eukaryotic mRNAs and is also used to silence certain maternal mRNAs translationally during oocyte maturation and early embryonic development. Interacts with both the 3'-end poly(A) tail and the 5'-end cap structure during degradation, the interaction with the cap structure being required for an efficient degradation of poly(A) tails. Involved in nonsense-mediated mRNA decay, a critical process of selective degradation of mRNAs that contain premature stop codons. Also involved in degradation of inherently unstable mRNAs that contain AU-rich elements (AREs) in their 3'-UTR, possibly via its interaction with KHSRP. Probably mediates the removal of poly(A) tails of AREs mRNAs, which constitutes the first step of destabilization. Also able to recognize poly(A) tails of microRNAs such as MIR21 and H/ACA box snoRNAs (small nucleolar RNAs) leading to microRNAs degradation or snoRNA increased stability. The chain is Poly(A)-specific ribonuclease PARN (PARN) from Pongo abelii (Sumatran orangutan).